We begin with the raw amino-acid sequence, 193 residues long: Orotate phosphoribosyltransferase (193 aa).

A 5-phospho-alpha-D-ribose 1-diphosphate-binding site is contributed by 116-124 (EDVVTTGKS). Orotate contacts are provided by T120 and R148.

Belongs to the purine/pyrimidine phosphoribosyltransferase family. PyrE subfamily. In terms of assembly, homodimer. The cofactor is Mg(2+).

The catalysed reaction is orotidine 5'-phosphate + diphosphate = orotate + 5-phospho-alpha-D-ribose 1-diphosphate. It participates in pyrimidine metabolism; UMP biosynthesis via de novo pathway; UMP from orotate: step 1/2. Functionally, catalyzes the transfer of a ribosyl phosphate group from 5-phosphoribose 1-diphosphate to orotate, leading to the formation of orotidine monophosphate (OMP). The sequence is that of Orotate phosphoribosyltransferase from Clostridium tetani (strain Massachusetts / E88).